Here is a 238-residue protein sequence, read N- to C-terminus: 1-(5-phosphoribosyl)-5-[(5-phosphoribosylamino)methylideneamino] imidazole-4-carboxamide isomerase (238 aa).

Catalysis depends on D8, which acts as the Proton acceptor. D129 (proton donor) is an active-site residue.

This sequence belongs to the HisA/HisF family.

The protein resides in the cytoplasm. The enzyme catalyses 1-(5-phospho-beta-D-ribosyl)-5-[(5-phospho-beta-D-ribosylamino)methylideneamino]imidazole-4-carboxamide = 5-[(5-phospho-1-deoxy-D-ribulos-1-ylimino)methylamino]-1-(5-phospho-beta-D-ribosyl)imidazole-4-carboxamide. It participates in amino-acid biosynthesis; L-histidine biosynthesis; L-histidine from 5-phospho-alpha-D-ribose 1-diphosphate: step 4/9. The polypeptide is 1-(5-phosphoribosyl)-5-[(5-phosphoribosylamino)methylideneamino] imidazole-4-carboxamide isomerase (Anaeromyxobacter dehalogenans (strain 2CP-1 / ATCC BAA-258)).